The primary structure comprises 475 residues: Exodeoxyribonuclease 7 large subunit (475 aa).

The protein belongs to the XseA family. As to quaternary structure, heterooligomer composed of large and small subunits.

It is found in the cytoplasm. It catalyses the reaction Exonucleolytic cleavage in either 5'- to 3'- or 3'- to 5'-direction to yield nucleoside 5'-phosphates.. Its function is as follows. Bidirectionally degrades single-stranded DNA into large acid-insoluble oligonucleotides, which are then degraded further into small acid-soluble oligonucleotides. The sequence is that of Exodeoxyribonuclease 7 large subunit from Bartonella henselae (strain ATCC 49882 / DSM 28221 / CCUG 30454 / Houston 1) (Rochalimaea henselae).